Consider the following 55-residue polypeptide: Myrmicitoxin(1)-Pr6b (55 aa).

The N-terminal stretch at 1–22 is a signal peptide; it reads MKIIYAFLLIAVVAFMGSGIMA. Residues 23–29 constitute a propeptide that is removed on maturation; the sequence is ESLAEAI.

The protein belongs to the formicidae venom clade 4 family. Expressed by the venom gland.

It localises to the secreted. Probable neurotoxin. The chain is Myrmicitoxin(1)-Pr6b from Pogonomyrmex rugosus (Desert harvester ant).